The chain runs to 324 residues: Glyoxylate/hydroxypyruvate reductase B (324 aa).

Residues Arg-237 and Glu-266 contribute to the active site. The active-site Proton donor is the His-285.

Belongs to the D-isomer specific 2-hydroxyacid dehydrogenase family. GhrB subfamily. Homodimer.

Its subcellular location is the cytoplasm. It catalyses the reaction glycolate + NADP(+) = glyoxylate + NADPH + H(+). The enzyme catalyses (R)-glycerate + NAD(+) = 3-hydroxypyruvate + NADH + H(+). It carries out the reaction (R)-glycerate + NADP(+) = 3-hydroxypyruvate + NADPH + H(+). In terms of biological role, catalyzes the NADPH-dependent reduction of glyoxylate and hydroxypyruvate into glycolate and glycerate, respectively. The polypeptide is Glyoxylate/hydroxypyruvate reductase B (Salmonella dublin (strain CT_02021853)).